Here is a 127-residue protein sequence, read N- to C-terminus: Fluoride-specific ion channel FluC (127 aa).

A run of 3 helical transmembrane segments spans residues 37 to 57 (TSFVNIAGSLAMGLLAGWLAL), 68 to 88 (LFLATGVLGGFTTFSAFSLEV), and 102 to 122 (LYAGVSVLLGVSALFIGLWMA). Na(+) is bound by residues Gly-76 and Thr-79.

Belongs to the fluoride channel Fluc/FEX (TC 1.A.43) family.

The protein localises to the cell inner membrane. The catalysed reaction is fluoride(in) = fluoride(out). Its activity is regulated as follows. Na(+) is not transported, but it plays an essential structural role and its presence is essential for fluoride channel function. Fluoride-specific ion channel. Important for reducing fluoride concentration in the cell, thus reducing its toxicity. This chain is Fluoride-specific ion channel FluC, found in Hyphomonas neptunium (strain ATCC 15444).